The following is a 431-amino-acid chain: Ammonium transporter 3 (431 aa).

Topologically, residues 1 to 27 are extracellular; it reads MEQFSTSSSESSDSSSEYSLEFYMDTS. Residues 28-48 traverse the membrane as a helical segment; sequence WVLDAANLVFFMQAGFGMLEA. Topologically, residues 49–63 are cytoplasmic; that stretch reads GMVRAKNTKSILLKN. The helical transmembrane segment at 64–84 threads the bilayer; it reads LINTAICAISYYCVGHSFAYG. Over 85–102 the chain is Extracellular; the sequence is KVNPNSFVGFGNFFLMDY. A helical membrane pass occupies residues 103–125; that stretch reads THYAYWMIQWAYAATATTIATGA. Topologically, residues 126 to 134 are cytoplasmic; it reads MAERLQLHC. Residues 135–155 traverse the membrane as a helical segment; the sequence is YILFTLVQTILIYPFVAHWIW. The Extracellular portion of the chain corresponds to 156–160; it reads SQNGW. The helical transmembrane segment at 161–181 threads the bilayer; that stretch reads LFDLGIVDFAGGAVIHIVAGI. At 182–211 the chain is on the cytoplasmic side; sequence TGACGSFLLGPRIGRFNQESGKPKNLPGHS. A helical membrane pass occupies residues 212-232; that stretch reads VVLMSLGAMILWYSWYGYTAG. At 233–249 the chain is on the extracellular side; it reads ASLGMTRSRVLPASRVS. A helical membrane pass occupies residues 250–270; sequence VVVTLSGATGLITVLGIGKIF. The Cytoplasmic portion of the chain corresponds to 271–300; sequence NGHYDLVKGINGLIAGLVSSTSSCAYIEPW. Residues 301–321 traverse the membrane as a helical segment; the sequence is AAIIIGFIGGIVYWFSSWALL. Residues 322–333 lie on the Extracellular side of the membrane; sequence NWLRLDDPVDST. Residues 334–354 traverse the membrane as a helical segment; the sequence is AIHLFGGCWSLISVAFFATHG. Topologically, residues 355–357 are cytoplasmic; the sequence is RVR. A helical membrane pass occupies residues 358 to 378; it reads NPDIILPGGIFYGGGISLLWV. Q379 is a topological domain (extracellular). The chain crosses the membrane as a helical span at residues 380-400; it reads LVGMVLAILWAGFLSGIFFFT. At 401–431 the chain is on the cytoplasmic side; it reads MDYFGKLRVDVDTELAGLDNSNHGGSAYIFD.

It belongs to the ammonia transporter channel (TC 1.A.11.2) family.

Its subcellular location is the cell membrane. It is found in the endosome membrane. The protein resides in the cytoplasmic vesicle. It localises to the phagosome membrane. In terms of biological role, ammonium transporter that mediates the import of ammonium in prespore cells. Controls ammonium homeostasis during growth and development. Ammonium has been shown to function as a morphogen at multiple steps during the development. May function as an ammonia sensor that relays information concerning ammonia concentrations to the signaling pathway involved in the slug versus culmination choice and regulates prestalk gene expression. This is Ammonium transporter 3 (amtC) from Dictyostelium discoideum (Social amoeba).